Reading from the N-terminus, the 424-residue chain is MGLSYGLFICFLLWAGTGLCYPPTTTEDKTHPSLPSSPSVVVECRHAWLVVNVSKNLFGTGRLVRPADLTLGPENCEPLISGDSDDTVRFEVELHKCGNSVQVTEDALVYSTFLLHNPRPMGNLSILRTNRAEVPIECRYPRHSNVSSEAILPTWVPFRTTMLSEEKLAFSLRLMEEDWGSEKQSPTFQLGDLAHLQAEVHTGRHIPLRLFVDYCVATLTPDQNASPHHTIVDFHGCLVDGLSDASSAFKAPRPRPETLQFTVDTFHFANDPRNMIYITCHLKVTPASRVPDQLNKACSFIKSSNRWFPVEGPADICNCCNKGSCGLQGRSWRLSHLDRPWHKMASRNRRHVTEEADITVGPLIFLGKAADRGVEGSTSPHTSVMVGIGLATVLSLTLATIVLGLARRHHTASRPMICPVSASQ.

The signal sequence occupies residues 1–22; the sequence is MGLSYGLFICFLLWAGTGLCYP. At 23 to 383 the chain is on the extracellular side; sequence PTTTEDKTHP…VEGSTSPHTS (361 aa). The 263-residue stretch at 43 to 305 folds into the ZP domain; the sequence is ECRHAWLVVN…KACSFIKSSN (263 aa). Disulfide bonds link Cys44–Cys138 and Cys76–Cys97. Asn52 carries an N-linked (GlcNAc...) asparagine glycan. Residues Asn123 and Asn145 are each glycosylated (N-linked (GlcNAc...) asparagine). 3 O-linked (GalNAc...) threonine glycosylation sites follow: Thr154, Thr160, and Thr161. 2 cysteine pairs are disulfide-bonded: Cys215–Cys280 and Cys237–Cys298. A propeptide spans 349 to 424 (removed in mature form); sequence RRHVTEEADI…PMICPVSASQ (76 aa). A helical transmembrane segment spans residues 384–404; that stretch reads VMVGIGLATVLSLTLATIVLG. Topologically, residues 405-424 are cytoplasmic; sequence LARRHHTASRPMICPVSASQ.

The protein belongs to the ZP domain family. ZPC subfamily. In terms of assembly, polymers of ZP2 and ZP3 organized into long filaments cross-linked by ZP1 homodimers. Interacts with ZP1 and ZP2. Post-translationally, proteolytically cleaved before the transmembrane segment to yield the secreted ectodomain incorporated in the zona pellucida. In terms of processing, N-glycosylated. O-glycosylated; removal of O-linked glycans may play an important role in the post-fertilization block to polyspermy. In terms of tissue distribution, expressed in oocytes.

The protein resides in the zona pellucida. It localises to the cell membrane. In terms of biological role, component of the zona pellucida, an extracellular matrix surrounding oocytes which mediates sperm binding, induction of the acrosome reaction and prevents post-fertilization polyspermy. The zona pellucida is composed of 3 to 4 glycoproteins, ZP1, ZP2, ZP3, and ZP4. ZP3 is essential for sperm binding and zona matrix formation. This Felis catus (Cat) protein is Zona pellucida sperm-binding protein 3 (ZP3).